The following is a 598-amino-acid chain: Nicotinamide riboside transporter 1 (598 aa).

11 helical membrane passes run 48–68 (LAYW…SAAL), 71–91 (GLSY…TIIF), 112–132 (FVFG…MSIV), 174–194 (LVGF…KPYH), 197–217 (YLLI…VIYL), 241–261 (AWAW…GSTN), 273–293 (LAIW…VPIF), 372–392 (GALF…YNSS), 395–415 (FLTV…VMIC), 447–467 (AIVA…WEVN), and 484–504 (SFFS…FFPF). S560 and S572 each carry phosphoserine.

Belongs to the purine-cytosine permease (2.A.39) family.

It localises to the cell membrane. Functionally, high-affinity pH-dependent nicotinamide riboside transporter which also transports thiamine with low affinity. Involved in 5-fluorocytosine sensitivity. The chain is Nicotinamide riboside transporter 1 (NRT1) from Saccharomyces cerevisiae (strain ATCC 204508 / S288c) (Baker's yeast).